We begin with the raw amino-acid sequence, 127 residues long: Glycine cleavage system H protein 1 (127 aa).

The Lipoyl-binding domain maps to 20–101 (SVTVGITPYA…LGAGWFFRFI (82 aa)). At Lys60 the chain carries N6-lipoyllysine.

The protein belongs to the GcvH family. In terms of assembly, the glycine cleavage system is composed of four proteins: P, T, L and H. (R)-lipoate is required as a cofactor.

In terms of biological role, the glycine cleavage system catalyzes the degradation of glycine. The H protein shuttles the methylamine group of glycine from the P protein to the T protein. The protein is Glycine cleavage system H protein 1 of Pseudomonas syringae pv. tomato (strain ATCC BAA-871 / DC3000).